A 621-amino-acid polypeptide reads, in one-letter code: Probable potassium transport system protein Kup 2 (621 aa).

12 consecutive transmembrane segments (helical) span residues 12-32 (ITVA…LYAL), 52-72 (VLSL…VAII), 101-121 (WIIT…SMIT), 138-158 (PDLK…LFFI), 166-186 (VGKL…ILGL), 213-233 (GLAF…EALY), 249-269 (FGFV…LLLI), 286-306 (ALIP…QAVI), 338-358 (IYVP…VIGF), 370-390 (IAVT…MVLM), 396-416 (LLVA…FAAN), and 420-440 (IPEG…VLTT).

The protein belongs to the HAK/KUP transporter (TC 2.A.72) family.

The protein localises to the cell inner membrane. It catalyses the reaction K(+)(in) + H(+)(in) = K(+)(out) + H(+)(out). In terms of biological role, transport of potassium into the cell. Likely operates as a K(+):H(+) symporter. This is Probable potassium transport system protein Kup 2 from Dechloromonas aromatica (strain RCB).